A 29-amino-acid polypeptide reads, in one-letter code: Protein YldA (29 aa).

A helical membrane pass occupies residues Phe5–Leu25.

It localises to the cell inner membrane. In Escherichia coli (strain K12), this protein is Protein YldA.